The primary structure comprises 110 residues: UPF0060 membrane protein BPSL1340 (110 aa).

The next 4 membrane-spanning stretches (helical) occupy residues 9-29, 34-54, 64-84, and 86-106; these read ALFV…WLVL, PAWL…LLTL, AAYG…VDGV, and LSRW…VIAL.

The protein belongs to the UPF0060 family.

It is found in the cell inner membrane. This is UPF0060 membrane protein BPSL1340 from Burkholderia pseudomallei (strain K96243).